A 125-amino-acid polypeptide reads, in one-letter code: Small ribosomal subunit protein uS12 (125 aa).

D89 is modified (3-methylthioaspartic acid). Residues 105-125 (QGVKDRKQSRSKYGAKKPKAK) form a disordered region. A compositionally biased stretch (basic residues) spans 113–125 (SRSKYGAKKPKAK).

This sequence belongs to the universal ribosomal protein uS12 family. Part of the 30S ribosomal subunit. Contacts proteins S8 and S17. May interact with IF1 in the 30S initiation complex.

With S4 and S5 plays an important role in translational accuracy. In terms of biological role, interacts with and stabilizes bases of the 16S rRNA that are involved in tRNA selection in the A site and with the mRNA backbone. Located at the interface of the 30S and 50S subunits, it traverses the body of the 30S subunit contacting proteins on the other side and probably holding the rRNA structure together. The combined cluster of proteins S8, S12 and S17 appears to hold together the shoulder and platform of the 30S subunit. This chain is Small ribosomal subunit protein uS12, found in Delftia acidovorans (strain DSM 14801 / SPH-1).